Reading from the N-terminus, the 433-residue chain is Trigger factor (433 aa).

Residues G165–V250 form the PPIase FKBP-type domain.

Belongs to the FKBP-type PPIase family. Tig subfamily.

The protein localises to the cytoplasm. It carries out the reaction [protein]-peptidylproline (omega=180) = [protein]-peptidylproline (omega=0). Involved in protein export. Acts as a chaperone by maintaining the newly synthesized protein in an open conformation. Functions as a peptidyl-prolyl cis-trans isomerase. The protein is Trigger factor of Sulfurimonas denitrificans (strain ATCC 33889 / DSM 1251) (Thiomicrospira denitrificans (strain ATCC 33889 / DSM 1251)).